The sequence spans 643 residues: MNANPKFISANAHVDEAAVAPLPNSRKVYVTGSQPDIRVPMREITQADTPTGFGGEKNPPIYVYDTSGPYTDPDAKIDIRAGLPALRQRWIEARGDTESLQGLSSEYGRERAADPATAELRFPGLHRTPRRAQPGKNVSQMHYAKQGIITPEMEYIAIRENQRRAEYLESLKASGPNGAKLAAMMGRQHPGQAFGATAFGPNGLQEITPEFVREEVARGRAIIPANINHPESEPMIIGRNFLVKINANIGNSAVTSSIGEEVDKMTWAIRWGGDTVMDLSTGKHIHETREWIIRNSPVPIGTVPIYQALEKVNGKAEDLTWEIFRDTLIEQAEQGVDYFTIHAGVRLQYVPLTANRMTGIVSRGGSIMAKWCLAHHKESFLYEHFEDICEIMKAYDVSFSLGDGLRPGSIYDANDEAQLGELKTLGELTQIAWKHDVQVMIEGPGHVPMQLIKENMDLQLEWCDEAPFYTLGPLTTDIAPGYDHITSGIGAAMIGWFGTAMLCYVTPKEHLGLPNKDDVKTGIITYKLAAHAADLAKGHPGAQVRDNALSKARFEFRWEDQFNLGLDPDKAREFHDETLPKDSAKVAHFCSMCGPHFCSMKITQDVRDYAAKEGMSDADALKKGMEVKAVEFIKSGAEIYQRQ.

Substrate-binding positions include Asn-248, Met-277, Tyr-306, His-342, 362 to 364, 403 to 406, and Glu-442; these read SRG and DGLR. His-446 contacts Zn(2+). Substrate is bound at residue Tyr-469. His-510 serves as a coordination point for Zn(2+). Cys-590, Cys-593, and Cys-598 together coordinate [4Fe-4S] cluster.

It belongs to the ThiC family. As to quaternary structure, homodimer. Requires [4Fe-4S] cluster as cofactor.

It carries out the reaction 5-amino-1-(5-phospho-beta-D-ribosyl)imidazole + S-adenosyl-L-methionine = 4-amino-2-methyl-5-(phosphooxymethyl)pyrimidine + CO + 5'-deoxyadenosine + formate + L-methionine + 3 H(+). Its pathway is cofactor biosynthesis; thiamine diphosphate biosynthesis. In terms of biological role, catalyzes the synthesis of the hydroxymethylpyrimidine phosphate (HMP-P) moiety of thiamine from aminoimidazole ribotide (AIR) in a radical S-adenosyl-L-methionine (SAM)-dependent reaction. This Paraburkholderia phymatum (strain DSM 17167 / CIP 108236 / LMG 21445 / STM815) (Burkholderia phymatum) protein is Phosphomethylpyrimidine synthase.